The sequence spans 682 residues: Probable methyltransferase PMT12 (682 aa).

Topologically, residues 1 to 11 (MKLFLNSNLLR) are cytoplasmic. Residues 12 to 32 (NSIFFKISAFVLISVACFFLG) form a helical; Signal-anchor for type II membrane protein membrane-spanning segment. Over 33 to 682 (KHWSEDGFRR…KRRKTKGKRA (650 aa)) the chain is Lumenal. 12 N-linked (GlcNAc...) asparagine glycosylation sites follow: Asn67, Asn103, Asn125, Asn155, Asn173, Asn193, Asn273, Asn350, Asn395, Asn419, Asn600, and Asn625.

Belongs to the methyltransferase superfamily.

The protein localises to the golgi apparatus membrane. In Arabidopsis thaliana (Mouse-ear cress), this protein is Probable methyltransferase PMT12.